The chain runs to 214 residues: External core antigen (214 aa).

The signal sequence occupies residues 1–19; that stretch reads MQLFHLCLIISCTCPTVQA. Residues 25 to 27 form an HBEAG region; the sequence is GWL. Residues 165–214 are disordered; it reads NAPILSTLPETTVVRRRDRGRSPRRRTPSPRRRRSPSPRRRRSQSRESQC. A compositionally biased stretch (basic residues) spans 178–207; it reads VRRRDRGRSPRRRTPSPRRRRSPSPRRRRS. Residues 186–192 form a 1; half-length repeat; that stretch reads SPRRRTP. Residues 186–208 are 3 X 8 AA repeats of S-P-R-R-R-R-S-[PQ]; it reads SPRRRTPSPRRRRSPSPRRRRSQ. The propeptide occupies 186–214; the sequence is SPRRRTPSPRRRRSPSPRRRRSQSRESQC. 2 tandem repeats follow at residues 193-200 and 201-208.

This sequence belongs to the orthohepadnavirus precore antigen family. In terms of assembly, homodimerizes. Post-translationally, phosphorylated. Cleaved by host furin.

Its subcellular location is the secreted. The protein resides in the host nucleus. Functionally, may regulate immune response to the intracellular capsid in acting as a T-cell tolerogen, by having an immunoregulatory effect which prevents destruction of infected cells by cytotoxic T-cells. This immune regulation may predispose to chronicity during perinatal infections and prevent severe liver injury during adult infections. This is External core antigen from Hepatitis B virus genotype A2 subtype adw2 (strain Rutter 1979) (HBV-A).